Here is a 310-residue protein sequence, read N- to C-terminus: tRNA uridine(34) hydroxylase (310 aa).

The 99-residue stretch at 134 to 232 folds into the Rhodanese domain; the sequence is DDPDTLLIDT…YFEEVSQTES (99 aa). The Cysteine persulfide intermediate role is filled by Cys192.

It belongs to the TrhO family.

It carries out the reaction uridine(34) in tRNA + AH2 + O2 = 5-hydroxyuridine(34) in tRNA + A + H2O. Functionally, catalyzes oxygen-dependent 5-hydroxyuridine (ho5U) modification at position 34 in tRNAs. This chain is tRNA uridine(34) hydroxylase, found in Prochlorococcus marinus (strain MIT 9313).